Here is a 637-residue protein sequence, read N- to C-terminus: Chaperone protein HtpG (637 aa).

An a; substrate-binding region spans residues 1 to 345; the sequence is MSQQETHGFQ…SNDLPLNVSR (345 aa). The segment at 346-562 is b; that stretch reads EILQDNHITK…EGEMSSQMIK (217 aa). Residues 563–637 are c; that stretch reads LMQAAGQPVP…MNQMLLANLK (75 aa).

The protein belongs to the heat shock protein 90 family. Homodimer.

It localises to the cytoplasm. In terms of biological role, molecular chaperone. Has ATPase activity. The chain is Chaperone protein HtpG from Shewanella sp. (strain ANA-3).